We begin with the raw amino-acid sequence, 97 residues long: Peptide YY-A (97 aa).

The first 28 residues, 1-28, serve as a signal peptide directing secretion; that stretch reads MAVMLKPWTVVATVLICVLLCLGTFVDA. Tyrosine amide is present on Tyr-64. A propeptide spans 68-97 (C-terminal extension); the sequence is STSEDVMAELLFGDDTEHKQRSRYDDSFMW.

The protein belongs to the NPY family. In terms of tissue distribution, mainly expressed in brainstem neurons, and in the telencephalon. Also expressed in intestinal endocrine cells.

It localises to the secreted. In Danio rerio (Zebrafish), this protein is Peptide YY-A (pyya).